The sequence spans 784 residues: Rabenosyn-5 (784 aa).

The residue at position 2 (Ala-2) is an N-acetylalanine. Phosphoserine is present on Ser-3. The segment at 14 to 37 (FLCPLCLKDLQSFYQLHSHYEEEH) adopts a C2H2-type zinc-finger fold. Residues 100-263 (RSHLSDFKKH…HCKDTLLKRE (164 aa)) form a necessary for the correct targeting to endosomes region. The FYVE-type zinc finger occupies 157 to 260 (DQDVPFCPDC…CCTHCKDTLL (104 aa)). 6 residues coordinate Zn(2+): Cys-163, Cys-166, Cys-179, Cys-182, Cys-187, and Cys-190. Residues 207–224 (KESLSTHTSPSQSPNSVH) show a composition bias toward polar residues. A disordered region spans residues 207–241 (KESLSTHTSPSQSPNSVHGSRRGSISSMSSVSSVL). Ser-215, Ser-219, Ser-226, and Ser-230 each carry phosphoserine. A compositionally biased stretch (low complexity) spans 228-240 (RGSISSMSSVSSV). Zn(2+)-binding residues include Cys-252 and Cys-255. Residues 264–500 (QQIDEKEHTP…QLQDEYDQQQ (237 aa)) form a necessary for interaction with RAB4A region. The segment at 264–784 (QQIDEKEHTP…TLAKQKGGTD (521 aa)) is necessary for interaction with EHD1. Coiled coils occupy residues 378–414 (TKEQ…LEER) and 472–531 (QAKA…RELE). Residues 390-400 (KEEMERKRAVE) are compositionally biased toward basic and acidic residues. The tract at residues 390-429 (KEEMERKRAVERQAALESQRRLEERQSGLASRAANGEVAS) is disordered. Residues 496–515 (YDQQQTEKAIELSRRQAEEE) form the UIM domain. A disordered region spans residues 574-732 (DLGSSPVPSS…DSDSGPEAEE (159 aa)). Residues 579–598 (PVPSSTAPKTPSLSSTQPTR) show a composition bias toward polar residues. Positions 627 to 784 (PFDEEDLSSP…TLAKQKGGTD (158 aa)) are necessary for interaction with RAB5A. The segment covering 663 to 673 (PFEEEDEEEEA) has biased composition (acidic residues). Ser-684 is subject to Phosphoserine. Residues 722-732 (MDSDSGPEAEE) are compositionally biased toward acidic residues.

As to quaternary structure, interacts with EHD1, RAB4A, RAB5A, RAB14, RAB22A, RAB24 and VPS45. Binds simultaneously to RAB4A and RAB5A in vitro. Interacts with RAB4A and RAB5A that has been activated by GTP binding.

The protein localises to the cell membrane. It localises to the early endosome membrane. In terms of biological role, rab4/Rab5 effector protein acting in early endocytic membrane fusion and membrane trafficking of recycling endosomes. Required for endosome fusion either homotypically or with clathrin coated vesicles. Plays a role in the lysosomal trafficking of CTSD/cathepsin D from the Golgi to lysosomes. Also promotes the recycling of transferrin directly from early endosomes to the plasma membrane. Binds phospholipid vesicles containing phosphatidylinositol 3-phosphate (PtdInsP3). Plays a role in the recycling of transferrin receptor to the plasma membrane. This chain is Rabenosyn-5, found in Homo sapiens (Human).